A 970-amino-acid chain; its full sequence is Protein bicaudal C homolog 1-B (970 aa).

The tract at residues 1-50 (MAAQCGGYMNQSDPGSNSERSADSPLPGSEDDSPGSAAPHDPEWREERFR) is disordered. Residues 9 to 19 (MNQSDPGSNSE) show a composition bias toward polar residues. The span at 40–50 (HDPEWREERFR) shows a compositional bias: basic and acidic residues. KH domains follow at residues 130–197 (RVTL…RVRI) and 282–346 (PVST…RQYL). A compositionally biased stretch (polar residues) spans 596-605 (EASRQSNNHS). 3 disordered regions span residues 596–638 (EASR…SANT), 677–696 (SDSE…APGS), and 773–841 (RRAN…NKSA). Over residues 606 to 616 (SAEEVNSKTDS) the composition is skewed to basic and acidic residues. 2 stretches are compositionally biased toward polar residues: residues 783–810 (TMST…GSDS) and 819–831 (IDSS…SSIG). An SAM domain is found at 869–932 (FKGSDLPELF…LLAISELNKN (64 aa)).

This sequence belongs to the BicC family.

Its function is as follows. Putative RNA-binding protein. May be involved in regulating gene expression during embryonic development. Seems to be involved in endoderm formation. Ectopic expression results in endoderm formation in the absence of mesoderm induction. The protein is Protein bicaudal C homolog 1-B (bicc1-b) of Xenopus laevis (African clawed frog).